We begin with the raw amino-acid sequence, 255 residues long: tRNA pseudouridine synthase A (255 aa).

Asp52 acts as the Nucleophile in catalysis. Tyr111 provides a ligand contact to substrate.

This sequence belongs to the tRNA pseudouridine synthase TruA family. Homodimer.

The catalysed reaction is uridine(38/39/40) in tRNA = pseudouridine(38/39/40) in tRNA. In terms of biological role, formation of pseudouridine at positions 38, 39 and 40 in the anticodon stem and loop of transfer RNAs. The sequence is that of tRNA pseudouridine synthase A from Cereibacter sphaeroides (strain KD131 / KCTC 12085) (Rhodobacter sphaeroides).